Reading from the N-terminus, the 180-residue chain is ATP-dependent protease subunit HslV (180 aa).

The active site involves threonine 6. Residues alanine 164, cysteine 167, and threonine 170 each contribute to the Na(+) site.

This sequence belongs to the peptidase T1B family. HslV subfamily. A double ring-shaped homohexamer of HslV is capped on each side by a ring-shaped HslU homohexamer. The assembly of the HslU/HslV complex is dependent on binding of ATP.

It localises to the cytoplasm. The enzyme catalyses ATP-dependent cleavage of peptide bonds with broad specificity.. With respect to regulation, allosterically activated by HslU binding. In terms of biological role, protease subunit of a proteasome-like degradation complex believed to be a general protein degrading machinery. The chain is ATP-dependent protease subunit HslV from Borrelia turicatae (strain 91E135).